We begin with the raw amino-acid sequence, 763 residues long: Phosphoglycerol transferase I (763 aa).

4 helical membrane passes run 1-21 (MSELLSFALFLASVLIYAWKA), 26-46 (WWFAATLTVLGLFVVLNITLF), 77-97 (ILPGIGIVLGLTAVFGALGWI), and 108-128 (FGYSLLALLLALGSVDASPAF).

The protein belongs to the OpgB family.

Its subcellular location is the cell inner membrane. The enzyme catalyses a phosphatidylglycerol + a membrane-derived-oligosaccharide D-glucose = a 1,2-diacyl-sn-glycerol + a membrane-derived-oligosaccharide 6-(glycerophospho)-D-glucose.. Its pathway is glycan metabolism; osmoregulated periplasmic glucan (OPG) biosynthesis. Functionally, transfers a phosphoglycerol residue from phosphatidylglycerol to the membrane-bound nascent glucan backbones. The chain is Phosphoglycerol transferase I from Escherichia coli O139:H28 (strain E24377A / ETEC).